Reading from the N-terminus, the 386-residue chain is Meiotic chromosome segregation protein C1539.02 (386 aa).

Disordered stretches follow at residues 1–28, 46–85, and 366–386; these read MNQD…SNKS, RALI…SSKQ, and DIHE…KTKG. Over residues 15 to 28 the composition is skewed to polar residues; that stretch reads AETSQLKNFSSNKS.

It is found in the nucleus. Required for meiotic chromosome segregation. This chain is Meiotic chromosome segregation protein C1539.02, found in Schizosaccharomyces pombe (strain 972 / ATCC 24843) (Fission yeast).